Reading from the N-terminus, the 846-residue chain is Major vault protein beta (846 aa).

Alanine 2 carries the post-translational modification N-acetylalanine. 9 MVP repeats span residues 2-60, 61-115, 116-172, 173-225, 226-280, 281-332, 333-388, 389-458, and 459-521; these read ATPV…IPPR, QYCI…QPVP, LQVI…EPVR, AVII…GFIQ, ALVL…RDIK, AITL…IQNV, NVLS…RRKR, IPLD…STKV, and ITYR…FLGP.

In terms of assembly, the vault ribonucleoprotein particle is a huge (400 A x 670 A) cage structure of 12.9 MDa. It consists of a dimer of half-vaults, with each half-vault comprising 39 identical major vault protein (MVP) chains. Dictyostelium is one of the few organisms in which the major component is actually two proteins (alpha and beta).

Its subcellular location is the cytoplasm. It localises to the nucleus. Unknown, though MVP-beta is required for normal vault structure. The polypeptide is Major vault protein beta (mvpB) (Dictyostelium discoideum (Social amoeba)).